A 632-amino-acid chain; its full sequence is Probable electron transfer flavoprotein-ubiquinone oxidoreductase, mitochondrial (632 aa).

V93–I107 contacts FAD. [4Fe-4S] cluster contacts are provided by C575, C601, C604, and C607. The 30-residue stretch at K592–P621 folds into the 4Fe-4S ferredoxin-type domain.

This sequence belongs to the ETF-QO/FixC family. [4Fe-4S] cluster serves as cofactor. Requires FAD as cofactor.

Its subcellular location is the mitochondrion inner membrane. It catalyses the reaction a ubiquinone + reduced [electron-transfer flavoprotein] = a ubiquinol + oxidized [electron-transfer flavoprotein] + H(+). Accepts electrons from ETF and reduces ubiquinone. This chain is Probable electron transfer flavoprotein-ubiquinone oxidoreductase, mitochondrial, found in Schizosaccharomyces pombe (strain 972 / ATCC 24843) (Fission yeast).